The chain runs to 255 residues: Imidazole glycerol phosphate synthase subunit HisF (255 aa).

Catalysis depends on residues Asp-11 and Asp-130.

The protein belongs to the HisA/HisF family. In terms of assembly, heterodimer of HisH and HisF.

Its subcellular location is the cytoplasm. It carries out the reaction 5-[(5-phospho-1-deoxy-D-ribulos-1-ylimino)methylamino]-1-(5-phospho-beta-D-ribosyl)imidazole-4-carboxamide + L-glutamine = D-erythro-1-(imidazol-4-yl)glycerol 3-phosphate + 5-amino-1-(5-phospho-beta-D-ribosyl)imidazole-4-carboxamide + L-glutamate + H(+). It participates in amino-acid biosynthesis; L-histidine biosynthesis; L-histidine from 5-phospho-alpha-D-ribose 1-diphosphate: step 5/9. Its function is as follows. IGPS catalyzes the conversion of PRFAR and glutamine to IGP, AICAR and glutamate. The HisF subunit catalyzes the cyclization activity that produces IGP and AICAR from PRFAR using the ammonia provided by the HisH subunit. The sequence is that of Imidazole glycerol phosphate synthase subunit HisF from Campylobacter lari (strain RM2100 / D67 / ATCC BAA-1060).